The following is a 454-amino-acid chain: Protein phosphatase 1F (454 aa).

The segment covering 1–12 (MSSGAPQKSSPM) has biased composition (polar residues). Positions 1–28 (MSSGAPQKSSPMASGAEETPGFLDTLLQ) are disordered. In terms of domain architecture, PPM-type phosphatase spans 156–413 (LVSIHAIRNT…DNITVMVVFL (258 aa)). Mn(2+) is bound by residues Asp-198, Gly-199, Asp-360, and Asp-404. Residues 419 to 454 (LLEGGNQGEGDPQAEGRRQDLPSSLPEPETQAPPRS) form a disordered region. Phosphoserine is present on Ser-454.

It belongs to the PP2C family. As to quaternary structure, associates with FEM1B. Requires Mg(2+) as cofactor. The cofactor is Mn(2+).

The catalysed reaction is O-phospho-L-seryl-[protein] + H2O = L-seryl-[protein] + phosphate. It catalyses the reaction O-phospho-L-threonyl-[protein] + H2O = L-threonyl-[protein] + phosphate. Its function is as follows. Dephosphorylates and concomitantly deactivates CaM-kinase II activated upon autophosphorylation, and CaM-kinases IV and I activated upon phosphorylation by CaM-kinase kinase. Promotes apoptosis. The protein is Protein phosphatase 1F (PPM1F) of Homo sapiens (Human).